The sequence spans 178 residues: Large ribosomal subunit protein uL6 (178 aa).

Belongs to the universal ribosomal protein uL6 family. As to quaternary structure, part of the 50S ribosomal subunit.

Functionally, this protein binds to the 23S rRNA, and is important in its secondary structure. It is located near the subunit interface in the base of the L7/L12 stalk, and near the tRNA binding site of the peptidyltransferase center. The protein is Large ribosomal subunit protein uL6 of Francisella tularensis subsp. novicida (strain U112).